A 748-amino-acid polypeptide reads, in one-letter code: Sulfhydryl oxidase 1 (748 aa).

A signal peptide spans 1-32 (MRRCGRLSGPPSLLLLLLLLSPLLFSGPGAYA). The Thioredoxin domain occupies 33–159 (ARLSVLYSSS…RMRLIDALES (127 aa)). Active-site nucleophile residues include cysteine 73 and cysteine 76. 2 disulfides stabilise this stretch: cysteine 73–cysteine 76 and cysteine 104–cysteine 113. Asparagine 133 and asparagine 246 each carry an N-linked (GlcNAc...) asparagine glycan. Residues cysteine 396 and cysteine 408 are joined by a disulfide bond. The ERV/ALR sulfhydryl oxidase domain maps to 399 to 506 (SEPHFRGFPC…EDPHFPKVQW (108 aa)). FAD-binding positions include arginine 404, tryptophan 411, histidine 415, aspartate 454, histidine 458, 481–488 (WTSHNRVN), lysine 503, and tryptophan 506. A disulfide bridge links cysteine 452 with cysteine 455. The cysteines at positions 512 and 515 are disulfide-linked. The tract at residues 581–647 (GHEQAASAES…QENAPGQQHL (67 aa)) is disordered. Over residues 628-638 (ERMEDHQRDMQ) the composition is skewed to basic and acidic residues. Residues 711–731 (ISLCVGLYSVSFMGLLAMYTY) form a helical membrane-spanning segment.

Belongs to the quiescin-sulfhydryl oxidase (QSOX) family. Monomer. Requires FAD as cofactor. In terms of processing, N-glycosylated. O-glycosylated on Thr and Ser residues. In terms of tissue distribution, detected in skin (at protein level). Expressed in the seminal vesicles and skin.

Its subcellular location is the golgi apparatus membrane. It localises to the secreted. The catalysed reaction is 2 R'C(R)SH + O2 = R'C(R)S-S(R)CR' + H2O2. Catalyzes the oxidation of sulfhydryl groups in peptide and protein thiols to disulfides with the reduction of oxygen to hydrogen peroxide. Plays a role in disulfide bond formation in a variety of extracellular proteins. In fibroblasts, required for normal incorporation of laminin into the extracellular matrix, and thereby for normal cell-cell adhesion and cell migration. The polypeptide is Sulfhydryl oxidase 1 (Qsox1) (Mus musculus (Mouse)).